The chain runs to 317 residues: Adenine deaminase (317 aa).

Zn(2+)-binding residues include His14, His16, and His194. Glu197 acts as the Proton donor in catalysis. Asp275 lines the Zn(2+) pocket. Asp276 serves as a coordination point for substrate.

Belongs to the metallo-dependent hydrolases superfamily. Adenosine and AMP deaminases family. Adenine deaminase type 2 subfamily. Requires Zn(2+) as cofactor.

It catalyses the reaction adenine + H2O + H(+) = hypoxanthine + NH4(+). In terms of biological role, catalyzes the hydrolytic deamination of adenine to hypoxanthine. Plays an important role in the purine salvage pathway and in nitrogen catabolism. The protein is Adenine deaminase of Pseudomonas syringae pv. syringae (strain B728a).